The primary structure comprises 1008 residues: Ubiquitin carboxyl-terminal hydrolase 16 (1008 aa).

Residues L7–V27 traverse the membrane as a helical segment. Residues C74, C77, C85, C88, C94, C98, H107, and C111 each contribute to the Zn(2+) site. An MYND-type zinc finger spans residues C74–C111. Disordered regions lie at residues D122–P149, L159–D178, V187–H233, S275–L309, and S326–D379. Positions S193–S203 are enriched in low complexity. The span at E222–H233 shows a compositional bias: basic and acidic residues. Residues G284–S295 show a composition bias toward polar residues. Over residues S340–S351 the composition is skewed to low complexity. The 306-residue stretch at C542–C847 folds into the USP domain. The Nucleophile role is filled by C551. The Proton acceptor role is filled by H807. Disordered regions lie at residues K859–Q905 and F952–R1008. Low complexity-rich tracts occupy residues S878 to S888 and S965 to P992.

Belongs to the peptidase C19 family. As to quaternary structure, interacts with SHM1 and SHM4. Interacts with HIPP27. As to expression, expressed in flowers, siliques, rosette leaves, cauline leaves, stems and at a lower level in roots. In roots, expressed in the sieve elements.

Its subcellular location is the membrane. The catalysed reaction is Thiol-dependent hydrolysis of ester, thioester, amide, peptide and isopeptide bonds formed by the C-terminal Gly of ubiquitin (a 76-residue protein attached to proteins as an intracellular targeting signal).. Its function is as follows. Recognizes and hydrolyzes the peptide bond at the C-terminal Gly of ubiquitin. Involved in the processing of poly-ubiquitin precursors as well as that of ubiquitinated proteins. Involved in salt tolerance by modulating sodium transport activity and repressing cell death at least partially through modulating SHM1 stability and activity. Involved in cadmium tolerance by interacting with HIPP27 and probably modulating its stability. The protein is Ubiquitin carboxyl-terminal hydrolase 16 (UBP16) of Arabidopsis thaliana (Mouse-ear cress).